A 778-amino-acid chain; its full sequence is Endonuclease MutS2 (778 aa).

328 to 335 contacts ATP; the sequence is GPNTGGKT. The region spanning 702–777 is the Smr domain; sequence LDLRGKRYEE…GSGATIVTFK (76 aa).

It belongs to the DNA mismatch repair MutS family. MutS2 subfamily. Homodimer. Binds to stalled ribosomes, contacting rRNA.

Endonuclease that is involved in the suppression of homologous recombination and thus may have a key role in the control of bacterial genetic diversity. In terms of biological role, acts as a ribosome collision sensor, splitting the ribosome into its 2 subunits. Detects stalled/collided 70S ribosomes which it binds and splits by an ATP-hydrolysis driven conformational change. Acts upstream of the ribosome quality control system (RQC), a ribosome-associated complex that mediates the extraction of incompletely synthesized nascent chains from stalled ribosomes and their subsequent degradation. Probably generates substrates for RQC. The sequence is that of Endonuclease MutS2 from Streptococcus pneumoniae (strain Hungary19A-6).